A 146-amino-acid polypeptide reads, in one-letter code: U-scoloptoxin(16)-Er1a (146 aa).

An N-terminal signal peptide occupies residues 1 to 26 (MNTVSVVQFLAVGCAVFVLYGRGVFA).

Belongs to the scoloptoxin-16 family. Contains 4 disulfide bonds. As to expression, expressed by the venom gland.

The protein localises to the secreted. This chain is U-scoloptoxin(16)-Er1a, found in Ethmostigmus rubripes (Giant centipede).